The sequence spans 404 residues: L-cysteine:1D-myo-inositol 2-amino-2-deoxy-alpha-D-glucopyranoside ligase (404 aa).

Cys47 provides a ligand contact to Zn(2+). L-cysteinyl-5'-AMP is bound by residues 47 to 50 (CGIT), Thr62, and 85 to 87 (NIT). Residues 49–59 (ITPYDSTHLGH) carry the 'HIGH' region motif. The 'ERGGDP' region signature appears at 188-193 (ERGGDP). Trp228 is an L-cysteinyl-5'-AMP binding site. Residue Cys232 coordinates Zn(2+). 250 to 252 (GSD) contacts L-cysteinyl-5'-AMP. His257 provides a ligand contact to Zn(2+). Position 284 (Ile284) interacts with L-cysteinyl-5'-AMP. The 'KMSKS' region signature appears at 290–294 (KMSKS).

The protein belongs to the class-I aminoacyl-tRNA synthetase family. MshC subfamily. Monomer. Zn(2+) is required as a cofactor.

The enzyme catalyses 1D-myo-inositol 2-amino-2-deoxy-alpha-D-glucopyranoside + L-cysteine + ATP = 1D-myo-inositol 2-(L-cysteinylamino)-2-deoxy-alpha-D-glucopyranoside + AMP + diphosphate + H(+). In terms of biological role, catalyzes the ATP-dependent condensation of GlcN-Ins and L-cysteine to form L-Cys-GlcN-Ins. This chain is L-cysteine:1D-myo-inositol 2-amino-2-deoxy-alpha-D-glucopyranoside ligase, found in Corynebacterium striatum.